Reading from the N-terminus, the 235-residue chain is MSGFQFKQFFIAHDCCAMKVNTDGILLGSIADPSNARHILDLGTGTGLIAIMLAQRTASAQITALELEENAFHQAQENAQRCPWNNRIDVLQADIMTWKSTKKFDLIVSNPPYFEHSLASRNKQRDLARAVTYSHFDWLKQSQQWLTPNGRISFILPCDAGKKLLEQSHLLGLYCIEYWEICTKVGLSPKRVILTFSPQYAEMALHTLTIYDENQRYTADFTQFTEIFYLKVNSK.

Belongs to the methyltransferase superfamily. tRNA (adenine-N(6)-)-methyltransferase family.

The protein resides in the cytoplasm. The catalysed reaction is adenosine(37) in tRNA1(Val) + S-adenosyl-L-methionine = N(6)-methyladenosine(37) in tRNA1(Val) + S-adenosyl-L-homocysteine + H(+). Specifically methylates the adenine in position 37 of tRNA(1)(Val) (anticodon cmo5UAC). The polypeptide is tRNA1(Val) (adenine(37)-N6)-methyltransferase (Glaesserella parasuis serovar 5 (strain SH0165) (Haemophilus parasuis)).